Consider the following 300-residue polypeptide: Lysenin-related protein 2 (300 aa).

The N-terminal cap domain stretch occupies residues 12-35; that stretch reads EQIEVDVVAVWKEGYVYENRGSTS. The segment at 36-109 is beta-hairpin domain; that stretch reads VEQKIKITKG…SKEIEHTITI (74 aa). The N-terminal cap domain stretch occupies residues 110–158; that stretch reads PPTSKFTRWQLNADVGGADIEYMYLIDEVTPIGGTLSIPQVIKSRAKIL. Residues 159–299 are C-terminal receptor-binding domain; the sequence is VGREIYLGET…EDKWILEVVK (141 aa). Residues Lys-187, Ser-229, Tyr-235, and Tyr-284 each contribute to the an N-(acyl)-sphingosylphosphocholine site. Cys-274 and Cys-285 form a disulfide bridge.

Belongs to the lysenin family. As to quaternary structure, binds to sphingomyelin as a monomer by using its C-terminal domain. Forms a nonamer when sphingomyelin/LRP-2 ratio is lower than ca 500. Oligomerization, but not binding, is influenced by the fluidity of sphingomyelin. Expressed by coelomocytes.

The protein resides in the secreted. It localises to the target cell membrane. In terms of biological role, pore-forming toxin that specifically binds sphingomyelin in the plasma membrane of various cells. Has hemolytic activity. It also has antibacterial activities against B.megaterium. The protein is Lysenin-related protein 2 of Eisenia fetida (Red wiggler worm).